The following is a 355-amino-acid chain: Ribosomal RNA small subunit methyltransferase H (355 aa).

Residues 47–49 (GGY), Asp65, Phe92, Asp113, and Gln120 each bind S-adenosyl-L-methionine. Positions 332–355 (LLPLATLPETSHPKSASHSKSRRR) are disordered. Positions 346-355 (SASHSKSRRR) are enriched in basic residues.

Belongs to the methyltransferase superfamily. RsmH family.

The protein resides in the cytoplasm. It catalyses the reaction cytidine(1402) in 16S rRNA + S-adenosyl-L-methionine = N(4)-methylcytidine(1402) in 16S rRNA + S-adenosyl-L-homocysteine + H(+). Its function is as follows. Specifically methylates the N4 position of cytidine in position 1402 (C1402) of 16S rRNA. The sequence is that of Ribosomal RNA small subunit methyltransferase H from Beijerinckia indica subsp. indica (strain ATCC 9039 / DSM 1715 / NCIMB 8712).